A 347-amino-acid chain; its full sequence is UDP-N-acetylenolpyruvoylglucosamine reductase (347 aa).

An FAD-binding PCMH-type domain is found at 17–187; it reads IEQLAAQLVV…TAVGLKFAKA (171 aa). Arg163 is a catalytic residue. Ser232 acts as the Proton donor in catalysis. Residue Glu327 is part of the active site.

This sequence belongs to the MurB family. The cofactor is FAD.

Its subcellular location is the cytoplasm. It catalyses the reaction UDP-N-acetyl-alpha-D-muramate + NADP(+) = UDP-N-acetyl-3-O-(1-carboxyvinyl)-alpha-D-glucosamine + NADPH + H(+). Its pathway is cell wall biogenesis; peptidoglycan biosynthesis. Functionally, cell wall formation. The sequence is that of UDP-N-acetylenolpyruvoylglucosamine reductase from Vibrio cholerae serotype O1 (strain ATCC 39541 / Classical Ogawa 395 / O395).